The sequence spans 154 residues: NADPH-dependent 7-cyano-7-deazaguanine reductase (154 aa).

Polar residues predominate over residues 1 to 13; it reads MSKTDVSGLSQLG. Residues 1-24 form a disordered region; the sequence is MSKTDVSGLSQLGRQVDAPTSPET. Cysteine 52 (thioimide intermediate) is an active-site residue. The active-site Proton donor is aspartate 59. Substrate-binding positions include 74 to 76 and 93 to 94; these read VES and HE.

This sequence belongs to the GTP cyclohydrolase I family. QueF type 1 subfamily.

The protein localises to the cytoplasm. The catalysed reaction is 7-aminomethyl-7-carbaguanine + 2 NADP(+) = 7-cyano-7-deazaguanine + 2 NADPH + 3 H(+). The protein operates within tRNA modification; tRNA-queuosine biosynthesis. Functionally, catalyzes the NADPH-dependent reduction of 7-cyano-7-deazaguanine (preQ0) to 7-aminomethyl-7-deazaguanine (preQ1). In Allorhizobium ampelinum (strain ATCC BAA-846 / DSM 112012 / S4) (Agrobacterium vitis (strain S4)), this protein is NADPH-dependent 7-cyano-7-deazaguanine reductase.